The following is a 192-amino-acid chain: Peptidyl-tRNA hydrolase (192 aa).

Tyr-14 serves as a coordination point for tRNA. The Proton acceptor role is filled by His-19. Positions 64, 66, and 112 each coordinate tRNA.

The protein belongs to the PTH family. In terms of assembly, monomer.

Its subcellular location is the cytoplasm. It carries out the reaction an N-acyl-L-alpha-aminoacyl-tRNA + H2O = an N-acyl-L-amino acid + a tRNA + H(+). Functionally, hydrolyzes ribosome-free peptidyl-tRNAs (with 1 or more amino acids incorporated), which drop off the ribosome during protein synthesis, or as a result of ribosome stalling. Catalyzes the release of premature peptidyl moieties from peptidyl-tRNA molecules trapped in stalled 50S ribosomal subunits, and thus maintains levels of free tRNAs and 50S ribosomes. This Anaeromyxobacter sp. (strain K) protein is Peptidyl-tRNA hydrolase.